A 430-amino-acid chain; its full sequence is MFVDQVKISLKAGDGGNGITAYRREKYVPFGGPAGGDGGKGASVVFEVDEGSRTLLDFRYQRHFKASKGENGQSSNMHGKNAEDLVLKVPPGTIIKNVETDEVLADLVEDGQRAVVAKGGRGGRGNSRFATPRNPAPDFSEKGEPGEELDVSLELKLLADVGLVGFPSVGKSTLLSIVSKAKPKIGAYHFTTIKPNLGVVSAPDQRSFVMADLPGLIEGASDGVGLGHQFLRHVERTKVIVHMIDMSGSEGREPIEDYKVINQELAAYEQRLEDRPQIVVANKMDLPESQDNLILFKEEIGEDVPVIPVSTITRDNIDQLLYAIADKLEEYKDVDFTVEEEESVGINRVLYKHTPSQDKFTILRDDDGAYVVSGNAIERMFKMTDFNSDPAVRRFARQMRSMGIDDALRERGCKNGDIVRILGGEFEFVE.

Positions 1–158 (MFVDQVKISL…LDVSLELKLL (158 aa)) constitute an Obg domain. The tract at residues 118–145 (KGGRGGRGNSRFATPRNPAPDFSEKGEP) is disordered. In terms of domain architecture, OBG-type G spans 159-329 (ADVGLVGFPS…LLYAIADKLE (171 aa)). Residues 165–172 (GFPSVGKS), 190–194 (FTTIK), 212–215 (DLPG), 282–285 (NKMD), and 310–312 (STI) each bind GTP. Ser172 and Thr192 together coordinate Mg(2+). An OCT domain is found at 352 to 430 (KHTPSQDKFT…ILGGEFEFVE (79 aa)).

Belongs to the TRAFAC class OBG-HflX-like GTPase superfamily. OBG GTPase family. As to quaternary structure, monomer. Requires Mg(2+) as cofactor.

The protein resides in the cytoplasm. Its function is as follows. An essential GTPase which binds GTP, GDP and possibly (p)ppGpp with moderate affinity, with high nucleotide exchange rates and a fairly low GTP hydrolysis rate. Plays a role in control of the cell cycle, stress response, ribosome biogenesis and in those bacteria that undergo differentiation, in morphogenesis control. In Staphylococcus aureus (strain bovine RF122 / ET3-1), this protein is GTPase Obg.